The chain runs to 312 residues: uncharacterized protein (312 aa).

Positions 1–28 (MNSADTQEPKSFNHTDMWTAFGTTMSGA) are cleaved as a signal peptide.

In terms of biological role, the FAS-operon encodes genes involved in cytokinin production and in host plant fasciation (leafy gall). This is an uncharacterized protein from Rhodococcoides fascians (Rhodococcus fascians).